The following is a 663-amino-acid chain: Transketolase 2 (663 aa).

H25 serves as a coordination point for substrate. Thiamine diphosphate-binding positions include H65 and 113-115; that span reads GPL. D154 contributes to the Mg(2+) binding site. Positions 155 and 184 each coordinate thiamine diphosphate. Mg(2+)-binding residues include N184 and I186. H259, R356, and S383 together coordinate substrate. A thiamine diphosphate-binding site is contributed by H259. The active-site Proton donor is E410. Residue F436 coordinates thiamine diphosphate. Substrate contacts are provided by H460, D468, and R519.

This sequence belongs to the transketolase family. Homodimer. Mg(2+) serves as cofactor. Ca(2+) is required as a cofactor. The cofactor is Mn(2+). It depends on Co(2+) as a cofactor. Requires thiamine diphosphate as cofactor.

The enzyme catalyses D-sedoheptulose 7-phosphate + D-glyceraldehyde 3-phosphate = aldehydo-D-ribose 5-phosphate + D-xylulose 5-phosphate. Its function is as follows. Catalyzes the transfer of a two-carbon ketol group from a ketose donor to an aldose acceptor, via a covalent intermediate with the cofactor thiamine pyrophosphate. This is Transketolase 2 (tkt2) from Aliivibrio fischeri (strain ATCC 700601 / ES114) (Vibrio fischeri).